The following is a 730-amino-acid chain: Ribosomal RNA large subunit methyltransferase K/L (730 aa).

The THUMP domain maps to 46-157 (TAYRLCVWSR…RGEAILSLDL (112 aa)). Positions 394-418 (GERREAQPEGTEARQQVPQASEPAR) are disordered.

The protein belongs to the methyltransferase superfamily. RlmKL family.

The protein resides in the cytoplasm. It catalyses the reaction guanosine(2445) in 23S rRNA + S-adenosyl-L-methionine = N(2)-methylguanosine(2445) in 23S rRNA + S-adenosyl-L-homocysteine + H(+). The enzyme catalyses guanosine(2069) in 23S rRNA + S-adenosyl-L-methionine = N(2)-methylguanosine(2069) in 23S rRNA + S-adenosyl-L-homocysteine + H(+). Functionally, specifically methylates the guanine in position 2445 (m2G2445) and the guanine in position 2069 (m7G2069) of 23S rRNA. The protein is Ribosomal RNA large subunit methyltransferase K/L of Pseudomonas putida (strain ATCC 700007 / DSM 6899 / JCM 31910 / BCRC 17059 / LMG 24140 / F1).